The chain runs to 1195 residues: MSHQEQQFQHYPHHQHHHHHHHHHIHQVQSETQLEQRSSDLEPNRSRNTDRIGSSMDFRNLCQRIDVDGLKAKLPQLKLPKSLPKLRGRKIFRSSKSGSNAAGGGTAGGSAKDGAGAAQQTHLQVAGQSQQFINRTPQRISTISSLMYEGEQEEIRANLGQSQPGTYRSAGSLDDDYYAPGSGDRASRPISPIKIPVVGALDDSSPSENGNVRTTFTQRLQRGYKSLSELRIKHIFAKQTTVRRDNIEVDRYVEQYERELKSEKLARERRDREIAENYDIKIKTLAGTRQNTFDDDDVEHEQFERGKISHETDESGMEATPPLPSRRKPGIAATRFAKVRKPPLEMEEEQQQAAAEESPQANPPPPPPPRPSSYKQLLINKLPHLPSLPNLPQFSRTKEETTKTAENADENNASRKLSIRQNIKRLRKSIKRPSKIKSKAAAPVPDSDEEEATPDGQKTKDAPTRSSTANLRARLSRFASTEQLQQRWRKSFKVAKEPEELETKAEGSATGGASGVLGGLLVGSQLEKTLAKLNEKVHQLKFFQRNANNQNATTSKQPKPNTVGHEPIEIDDDELEATYHRSDSLEAENGNGNENDDSGEDISAEEAFGQIQEEDNEEDHSQDQTKRGQSSVSGIATAHAARQMAKLAEIQAASKSGAAAWSSESLEEIADEDYPRVLIHQEHSDAYESTLIIAVASKGSSMSPVVRSSGLKSSPAAGPKTSPHPEIRISASGPQKSMSYSPGNPRGEPVTKRSPSPEFKTPAGGNKIVPKSETSAWLPNEQIIAGFKEQTSWPAPALYKPKSIDIFEASAGGSAAFADFDEALRNAPVLRISAGSSIDTSGEEADDSCSRVTRIRVQSPQIGNSRESLMAQEEEDKEAERDSEEEEEERDPSERPPSESPPPPPLPQRRPPTKRPATPPIYDAVPPPLPVSKPPPPPSVETIPSVASLPSPAPVTRSMAQRSASMSRPAKPLVKTSSLRLTYNEQVRPGDVGKVNKLISRFEGGRPRLCPRRMHSEEYERCAQPEDEEPEMEQILELQIIERRAVDSVTPTNRAVVIPQITVNNNNNNERQLEQSDQSDQSAHQEITDTRKTKSMELALDRQNSNCSRSEYGSPLSFPSSRRSSTPTNLNANSNSNPNPSTNPNQNPSQILQHQRRSRRSMTRDDDNFYSFDSDEENSYYSISPSGSSRYVVEI.

Residues 1–10 (MSHQEQQFQH) show a composition bias toward low complexity. Disordered regions lie at residues 1 to 55 (MSHQ…IGSS), 85 to 132 (KLRG…SQQF), 291 to 471 (NTFD…TANL), 493 to 515 (KVAK…GASG), 544 to 567 (QRNA…GHEP), 613 to 637 (EEDN…GIAT), 702 to 771 (MSPV…IVPK), 833 to 977 (SAGS…VKTS), and 1060 to 1195 (QITV…VVEI). Residues 11 to 26 (YPHHQHHHHHHHHHIH) show a composition bias toward basic residues. Positions 37–50 (RSSDLEPNRSRNTD) are enriched in basic and acidic residues. Over residues 109–118 (GSAKDGAGAA) the composition is skewed to low complexity. A compositionally biased stretch (polar residues) spans 119–132 (QQTHLQVAGQSQQF). The span at 300–313 (HEQFERGKISHETD) shows a compositional bias: basic and acidic residues. Residues 351-360 (QQAAAEESPQ) show a composition bias toward low complexity. The span at 361–371 (ANPPPPPPPRP) shows a compositional bias: pro residues. Residues 400 to 450 (ETTKTAENADENNASRKLSIRQNIKRLRKSIKRPSKIKSKAAAPVPDSDEE) form a phospho-regulated basic and hydrophobic (PRBH) motif region. Basic residues predominate over residues 422-438 (NIKRLRKSIKRPSKIKS). Residues 494-505 (VAKEPEELETKA) show a composition bias toward basic and acidic residues. The span at 545–560 (RNANNQNATTSKQPKP) shows a compositional bias: polar residues. 2 stretches are compositionally biased toward polar residues: residues 732-742 (SGPQKSMSYSP) and 856-867 (RVQSPQIGNSRE). Residues 872–891 (QEEEDKEAERDSEEEEEERD) are compositionally biased toward acidic residues. Composition is skewed to pro residues over residues 898–910 (SESP…PQRR) and 925–939 (VPPP…PPPS). Residues 940-968 (VETIPSVASLPSPAPVTRSMAQRSASMSR) are compositionally biased toward low complexity. Residues 1075 to 1085 (QSDQSDQSAHQ) show a composition bias toward polar residues. Residues 1086-1095 (EITDTRKTKS) are compositionally biased toward basic and acidic residues. A compositionally biased stretch (polar residues) spans 1102–1111 (RQNSNCSRSE). 2 stretches are compositionally biased toward low complexity: residues 1114–1149 (SPLS…QNPS) and 1179–1195 (SYYS…VVEI).

In terms of processing, phosphorylated by aPKC which lowers lipid affinity and promotes dissociation from the cell cortex. In the photoreceptor cells, aPKC-mediated phosphorylation leads to its displacement from the stalk apical cortex and thus restricts its localization to the rhabdomeric apical cortex where it functions. Dephosphorylation appears to be light-dependent. Restricted to photoreceptor cells (at protein level). Not detected until approximately 48hrs after puparium formation (APF) and then maintained in the photoreceptor cells post-eclosion (at protein level).

The protein resides in the cytoplasm. Its subcellular location is the cell cortex. The protein localises to the cytosol. It is found in the cell projection. It localises to the rhabdomere. Required for the morphological differentiation and maintenance of the rhabdomeric photoreceptor apical domain. Acts as a downstream component of the gl and Pph13 transcriptional pathway which is required for photoreceptor cell development. Likely to function by regulating the trafficking or retention of rhabdomeric proteins including the phototransduction proteins ninaE and didum. The protein is Protein PIP82 of Drosophila melanogaster (Fruit fly).